Reading from the N-terminus, the 475-residue chain is Sulfate adenylyltransferase subunit 1 (475 aa).

A tr-type G domain is found at 25–239 (KSLLRFLTCG…EVLETVEIQR (215 aa)). The interval 34 to 41 (GSVDDGKS) is G1. 34-41 (GSVDDGKS) is a GTP binding site. Residues 92–96 (GITID) are G2. Residues 113 to 116 (DTPG) form a G3 region. GTP-binding positions include 113–117 (DTPGH) and 168–171 (NKMD). A G4 region spans residues 168–171 (NKMD). The G5 stretch occupies residues 206–208 (SAL).

This sequence belongs to the TRAFAC class translation factor GTPase superfamily. Classic translation factor GTPase family. CysN/NodQ subfamily. As to quaternary structure, heterodimer composed of CysD, the smaller subunit, and CysN.

The enzyme catalyses sulfate + ATP + H(+) = adenosine 5'-phosphosulfate + diphosphate. It participates in sulfur metabolism; hydrogen sulfide biosynthesis; sulfite from sulfate: step 1/3. In terms of biological role, with CysD forms the ATP sulfurylase (ATPS) that catalyzes the adenylation of sulfate producing adenosine 5'-phosphosulfate (APS) and diphosphate, the first enzymatic step in sulfur assimilation pathway. APS synthesis involves the formation of a high-energy phosphoric-sulfuric acid anhydride bond driven by GTP hydrolysis by CysN coupled to ATP hydrolysis by CysD. This is Sulfate adenylyltransferase subunit 1 from Escherichia coli O9:H4 (strain HS).